The sequence spans 1015 residues: Beta-galactosidase (1015 aa).

The Proton donor role is filled by E434. Catalysis depends on E513, which acts as the Nucleophile.

Belongs to the glycosyl hydrolase 2 family. The cofactor is Mg(2+). It depends on Mn(2+) as a cofactor.

The catalysed reaction is Hydrolysis of terminal non-reducing beta-D-galactose residues in beta-D-galactosides.. The protein is Beta-galactosidase (lacZ) of Arthrobacter sp. (strain B7).